The following is a 350-amino-acid chain: MTVRIALDAMGGDNAPRAVIEGMLEVQKKRPEVVFTLVGIESRIRQELEQMGVEEDGFRIWHASEVVEMDEKPAVALRTKKDSSMRVGANLVKENQVDAFVSAGNTGALMATAKFVLKTLRGIDRPAIASVIPAVGGETLMLDLGANVDCSSEHLCQFALMGSIFANAVLGVRAPRVGLLNIGEEDTKGNEQVRDAGEQLKARSATLIPGGSYVGNVEGTDIFKDTVDVVVCDGFVGNVSLKSIEGTAKMLTHYLRGAFTKNWKTKLMYLIARPALRCFRDEMDPRKHNGAILLGLNGVVVKSHGGADSVAYAHAIHVAVDLAEKQVTKRIRDAVAKFRAEGTQPSDPAV.

It belongs to the PlsX family. Homodimer. Probably interacts with PlsY.

The protein localises to the cytoplasm. The catalysed reaction is a fatty acyl-[ACP] + phosphate = an acyl phosphate + holo-[ACP]. It functions in the pathway lipid metabolism; phospholipid metabolism. Functionally, catalyzes the reversible formation of acyl-phosphate (acyl-PO(4)) from acyl-[acyl-carrier-protein] (acyl-ACP). This enzyme utilizes acyl-ACP as fatty acyl donor, but not acyl-CoA. The sequence is that of Phosphate acyltransferase from Magnetococcus marinus (strain ATCC BAA-1437 / JCM 17883 / MC-1).